The primary structure comprises 254 residues: MAQIAPLRVQLIAKTEFLAPPDVSWTTDADGGSALVEFAGRACYQSWSKPNPRTATNAAYIKHIIDVGHVAVLEHASVSFYISGISRSCTHELIRHRHFSYSQLSQRYVPEKDAQVVVPPDMEDDDELQQILIAAVEASRATYTELLVKLNAKLMAGELGGNRAVLRRKQARQAAHAVLPNANETRIVVTGNYRAWRHFIAMRASEHADVEIRRLAIVCLRRLVDVAPAVFADFEITALADGTEVATSPLATEA.

The 231-residue stretch at 7–237 (LRVQLIAKTE…PAVFADFEIT (231 aa)) folds into the ThyX domain. DUMP contacts are provided by residues 92-95 (ELIR), 103-107 (QLSQR), and His-176. Residues 95–97 (RHR) and Gln-103 contribute to the FAD site. The short motif at 95–105 (RHRHFSYSQLS) is the ThyX motif element. Residues 192–194 (NYR) and His-198 contribute to the FAD site. Arg-203 is a binding site for dUMP. The Involved in ionization of N3 of dUMP, leading to its activation role is filled by Arg-203.

The protein belongs to the thymidylate synthase ThyX family. As to quaternary structure, homotetramer. The cofactor is FAD.

It catalyses the reaction dUMP + (6R)-5,10-methylene-5,6,7,8-tetrahydrofolate + NADPH + H(+) = dTMP + (6S)-5,6,7,8-tetrahydrofolate + NADP(+). The protein operates within pyrimidine metabolism; dTTP biosynthesis. In terms of biological role, catalyzes the reductive methylation of 2'-deoxyuridine-5'-monophosphate (dUMP) to 2'-deoxythymidine-5'-monophosphate (dTMP) while utilizing 5,10-methylenetetrahydrofolate (mTHF) as the methyl donor, and NADPH and FADH(2) as the reductant. This chain is Flavin-dependent thymidylate synthase, found in Mycobacterium leprae (strain Br4923).